The sequence spans 1032 residues: Connector enhancer of kinase suppressor of ras 2 (1032 aa).

In terms of domain architecture, SAM spans 11 to 76 (WSPSQVVDWM…LEAVDLLCAL (66 aa)). The residue at position 12 (serine 12) is a Phosphoserine. The 95-residue stretch at 84 to 178 (NLKTLSHKLN…TIVQQDCTVY (95 aa)) folds into the CRIC domain. One can recognise a PDZ domain in the interval 215 to 297 (VIQLANIKPS…GVILTLKKRP (83 aa)). Positions 302 to 515 (TSAPALLKNM…PAHYSLLPSL (214 aa)) constitute a DUF1170 domain. The span at 324–340 (RSPTSSVATPSSTISTP) shows a compositional bias: low complexity. A disordered region spans residues 324–349 (RSPTSSVATPSSTISTPTKRDSSALQ). A phosphoserine mark is found at serine 338 and serine 390. 2 disordered regions span residues 480–509 (EEYMFQRNSKKDTGKKSKKKGDKSNSPAHY) and 538–558 (FQQSSLQHKSKKKNKGAISGK). A compositionally biased stretch (basic residues) spans 545-558 (HKSKKKNKGAISGK). Residues 570–669 (RGDCEGWLWK…WLNRINMLTA (100 aa)) form the PH domain. Positions 682–766 (DYWSESDKEE…PIRKTASQRR (85 aa)) are disordered. Phosphotyrosine is present on tyrosine 683. The segment covering 683 to 693 (YWSESDKEEAD) has biased composition (acidic residues). Residues serine 685 and serine 687 each carry the phosphoserine modification. Pro residues predominate over residues 701 to 714 (DSPPPPYDTYPRPP). The segment covering 730–740 (LSSTETSQSQS) has biased composition (low complexity). A phosphoserine mark is found at serine 756 and serine 767. The segment at 864–900 (ACDPQDDIQPPEVEEEEEEEEEEAAGENVGEKNENRE) is disordered. Residues 874–917 (PEVEEEEEEEEEEAAGENVGEKNENREEKLGDSLQDLYRALEEA) adopt a coiled-coil conformation. Residues 875-888 (EVEEEEEEEEEEAA) show a composition bias toward acidic residues. Position 906 is a phosphoserine (serine 906).

This sequence belongs to the CNKSR family. In terms of assembly, interacts with RAF1, RAB2L and RAL GTPase proteins. Phosphorylated on tyrosine.

It localises to the cytoplasm. It is found in the membrane. In terms of biological role, may function as an adapter protein or regulator of Ras signaling pathways. This chain is Connector enhancer of kinase suppressor of ras 2 (Cnksr2), found in Mus musculus (Mouse).